The chain runs to 556 residues: 2-isopropylmalate synthase (556 aa).

The 275-residue stretch at 33 to 307 (PIWLSSDLRD…DPQLDFSDID (275 aa)) folds into the Pyruvate carboxyltransferase domain. Positions 42, 246, 248, and 282 each coordinate Mg(2+). The segment at 439-556 (ATAPYTLKGH…ALHQAQEAAA (118 aa)) is regulatory domain.

This sequence belongs to the alpha-IPM synthase/homocitrate synthase family. LeuA type 2 subfamily. As to quaternary structure, homodimer. It depends on Mg(2+) as a cofactor.

Its subcellular location is the cytoplasm. It carries out the reaction 3-methyl-2-oxobutanoate + acetyl-CoA + H2O = (2S)-2-isopropylmalate + CoA + H(+). The protein operates within amino-acid biosynthesis; L-leucine biosynthesis; L-leucine from 3-methyl-2-oxobutanoate: step 1/4. Its function is as follows. Catalyzes the condensation of the acetyl group of acetyl-CoA with 3-methyl-2-oxobutanoate (2-ketoisovalerate) to form 3-carboxy-3-hydroxy-4-methylpentanoate (2-isopropylmalate). The chain is 2-isopropylmalate synthase from Stutzerimonas stutzeri (strain A1501) (Pseudomonas stutzeri).